The sequence spans 256 residues: Ribosomal RNA large subunit methyltransferase E (256 aa).

The S-adenosyl-L-methionine site is built by glycine 48, tryptophan 50, aspartate 68, aspartate 86, and aspartate 111. Lysine 151 serves as the catalytic Proton acceptor. Positions 198 to 256 (PVSPGDELDATVVDIGSEGDGIIKIDGYTLFVPGVENGDSVRVRVTDLKSNVGFAEVIE) constitute a TRAM domain.

This sequence belongs to the class I-like SAM-binding methyltransferase superfamily. RNA methyltransferase RlmE family.

The protein resides in the cytoplasm. It carries out the reaction uridine(2552) in 23S rRNA + S-adenosyl-L-methionine = 2'-O-methyluridine(2552) in 23S rRNA + S-adenosyl-L-homocysteine + H(+). Its function is as follows. Specifically methylates the uridine in position 2552 of 23S rRNA at the 2'-O position of the ribose in the fully assembled 50S ribosomal subunit. The polypeptide is Ribosomal RNA large subunit methyltransferase E (Haloquadratum walsbyi (strain DSM 16790 / HBSQ001)).